Reading from the N-terminus, the 227-residue chain is Cytidylate kinase (227 aa).

10 to 18 (GPASSGKST) contacts ATP.

This sequence belongs to the cytidylate kinase family. Type 1 subfamily.

Its subcellular location is the cytoplasm. It catalyses the reaction CMP + ATP = CDP + ADP. The catalysed reaction is dCMP + ATP = dCDP + ADP. The sequence is that of Cytidylate kinase from Streptococcus mutans serotype c (strain ATCC 700610 / UA159).